A 766-amino-acid chain; its full sequence is UPF0313 protein PP_4872 (766 aa).

Residues 371-649 (AYEMIRFSVN…KAFLRYHDPK (279 aa)) form the Radical SAM core domain. Cys-385, Cys-389, and Cys-392 together coordinate [4Fe-4S] cluster. The disordered stretch occupies residues 670–766 (GKHQLIPLHQ…KKPRQPVIPR (97 aa)). Basic and acidic residues predominate over residues 723–735 (KPWDKREKAKAEA).

It belongs to the UPF0313 family. The cofactor is [4Fe-4S] cluster.

This chain is UPF0313 protein PP_4872, found in Pseudomonas putida (strain ATCC 47054 / DSM 6125 / CFBP 8728 / NCIMB 11950 / KT2440).